The primary structure comprises 340 residues: MPKPHDNDHMPFPVLVGDIGGTNARFWILMDAHAAPKEFANIHTADFPTIDQAIQDCILDKSGFQPRSAILAVAGPIKDDEIPLTNCPWVIRPKAMIADLGFDDVLVVNDFEAQALAAASLGRNDREPIGPLTETSLNSRVILGPGTGLGVGGLLYTHHTWFPVPGEGGHVDIGPRSDRDWQIFPHIERIEGRISGEQILCGRGILHLYNAICAADGIEPVWTDPADVTQHALKGNDPVCVETMTLFVTYLGRIAGDMALVFMARGGVFLSGGISQKIIPLLKSPVFRAAFEDKAPHTEMMKTIPTFVAIHPQAALSGLAAYARTPSSYGVKHEGRRWQR.

17–22 (GDIGGT) contacts ATP.

This sequence belongs to the bacterial glucokinase family.

Its subcellular location is the cytoplasm. It catalyses the reaction D-glucose + ATP = D-glucose 6-phosphate + ADP + H(+). The chain is Glucokinase from Allorhizobium ampelinum (strain ATCC BAA-846 / DSM 112012 / S4) (Agrobacterium vitis (strain S4)).